A 154-amino-acid chain; its full sequence is MGLSDGEWQLVLNVWGKVEADVAGHGQEVLIRLFKGHPETLEKFDKFKHLKSEDEMKASEDLKKHGNTVLTALGGILKKKGHHEAELTPLAQSHATKHKIPVKYLEFISEAIIQVLQSKHPGDFGADAQGAMSKALELFRNDMAAKYKELGFQG.

A Globin domain is found at 2 to 148 (GLSDGEWQLV…FRNDMAAKYK (147 aa)). S4 bears the Phosphoserine mark. Nitrite is bound at residue H65. H65 is an O2 binding site. A Phosphothreonine modification is found at T68. H94 is a heme b binding site.

The protein belongs to the globin family. As to quaternary structure, monomeric.

It localises to the cytoplasm. It is found in the sarcoplasm. The enzyme catalyses Fe(III)-heme b-[protein] + nitric oxide + H2O = Fe(II)-heme b-[protein] + nitrite + 2 H(+). The catalysed reaction is H2O2 + AH2 = A + 2 H2O. Monomeric heme protein which primary function is to store oxygen and facilitate its diffusion within muscle tissues. Reversibly binds oxygen through a pentacoordinated heme iron and enables its timely and efficient release as needed during periods of heightened demand. Depending on the oxidative conditions of tissues and cells, and in addition to its ability to bind oxygen, it also has a nitrite reductase activity whereby it regulates the production of bioactive nitric oxide. Under stress conditions, like hypoxia and anoxia, it also protects cells against reactive oxygen species thanks to its pseudoperoxidase activity. The polypeptide is Myoglobin (MB) (Sus scrofa (Pig)).